Here is a 267-residue protein sequence, read N- to C-terminus: 14-3-3-like protein GF14 chi (267 aa).

Ala-2 is modified (N-acetylalanine). Phosphoserine is present on residues Ser-72 and Ser-195. The residue at position 216 (Thr-216) is a Phosphothreonine. Ser-267 is modified (phosphoserine).

The protein belongs to the 14-3-3 family. In terms of assembly, interacts with TPK1. Interacts with the isocitrate dehydrogenase IDH3, and malate dehydrogenases MDH1 and MDH2. Interacts with DREB1A and DREB1B in the nucleus. Interacts with CINV1.

It localises to the nucleus. It is found in the cytoplasm. Is associated with a DNA binding complex that binds to the G box, a well-characterized cis-acting DNA regulatory element found in plant genes. Involved in the regulation of nutrient metabolism. In Arabidopsis thaliana (Mouse-ear cress), this protein is 14-3-3-like protein GF14 chi (GRF1).